Here is a 413-residue protein sequence, read N- to C-terminus: Putative F-box/kelch-repeat protein At3g22870 (413 aa).

The region spanning 2–53 (TLTISDLPRDLKKKIFSRIPLRYVRALRLTCKEWETLIKSRSLKIDEEESQM) is the F-box domain. 2 Kelch repeats span residues 156-202 (LLRF…IGVS) and 331-379 (KVFI…RRRQ).

This Arabidopsis thaliana (Mouse-ear cress) protein is Putative F-box/kelch-repeat protein At3g22870.